Consider the following 541-residue polypeptide: Eukaryotic translation initiation factor 3 subunit D-1 (541 aa).

The segment at 98–136 (VQKPPHQRGRFRNMRGRGGRGRNPRGGLNNHHHHGMTTL) is disordered. Over residues 100-120 (KPPHQRGRFRNMRGRGGRGRN) the composition is skewed to basic residues.

This sequence belongs to the eIF-3 subunit D family. Component of the eukaryotic translation initiation factor 3 (eIF-3) complex. The eIF-3 complex interacts with pix.

Its subcellular location is the cytoplasm. Its function is as follows. mRNA cap-binding component of the eukaryotic translation initiation factor 3 (eIF-3) complex, which is involved in protein synthesis of a specialized repertoire of mRNAs and, together with other initiation factors, stimulates binding of mRNA and methionyl-tRNAi to the 40S ribosome. The eIF-3 complex specifically targets and initiates translation of a subset of mRNAs involved in cell proliferation. In the eIF-3 complex, eif3d specifically recognizes and binds the 7-methylguanosine cap of a subset of mRNAs. The sequence is that of Eukaryotic translation initiation factor 3 subunit D-1 from Drosophila persimilis (Fruit fly).